We begin with the raw amino-acid sequence, 77 residues long: Acyl carrier protein (77 aa).

One can recognise a Carrier domain in the interval 2 to 77 (ADVLERVTKI…DAVTYIESHL (76 aa)). At Ser37 the chain carries O-(pantetheine 4'-phosphoryl)serine.

It belongs to the acyl carrier protein (ACP) family. Post-translationally, 4'-phosphopantetheine is transferred from CoA to a specific serine of apo-ACP by AcpS. This modification is essential for activity because fatty acids are bound in thioester linkage to the sulfhydryl of the prosthetic group.

It is found in the cytoplasm. It functions in the pathway lipid metabolism; fatty acid biosynthesis. Carrier of the growing fatty acid chain in fatty acid biosynthesis. This Bacillus mycoides (strain KBAB4) (Bacillus weihenstephanensis) protein is Acyl carrier protein.